We begin with the raw amino-acid sequence, 391 residues long: MMITKQSYQKFALMRVFVFSLSAFIFNTTEFVPVALLSDIAKSFEMESATVGLMITAYAWVVSLGSLPLMLLSAKIERKRLLLFLFALFILSHILSALAWNFWVLLLSRMGIAFAHSIFWSITASLVIRVAPRNKKQQALGLLALGSSLAMILGLPLGRIIGQILDWRSTFGVIGGVATLIALLMWKLLPHLPSRNAGTLASVPVLMKRPLLMGIYLLVIMVISGHFTTYSYIEPFIIQISQFSPDITTLMLFVFGLAGVVGSFLFGRLYAKNSRKFIAFAMVLVICPQLLLFVFKNLEWVVFLQIFLWGIGITSLGISLQMRVLQLAPDATDVASAIYSGSYNVGIGSGALFGSIVIHQLGLGYIGFVGGALGLLALFWLRFITIKFKKT.

The next 12 membrane-spanning stretches (helical) occupy residues 16–36, 51–71, 82–102, 110–130, 138–158, 170–190, 210–230, 247–267, 277–297, 300–320, 338–358, and 361–381; these read VFVF…PVAL, VGLM…PLML, LLFL…AWNF, MGIA…VIRV, QALG…LPLG, TFGV…KLLP, PLLM…FTTY, ITTL…FLFG, FIAF…VFKN, WVVF…GISL, IYSG…SIVI, and LGLG…LFWL.

This sequence belongs to the major facilitator superfamily. SotB (TC 2.A.1.2) family.

It localises to the cell inner membrane. Its function is as follows. Involved in the efflux of sugars. The physiological role may be the reduction of the intracellular concentration of toxic sugars or sugar metabolites. This chain is Probable sugar efflux transporter, found in Helicobacter pylori (strain ATCC 700392 / 26695) (Campylobacter pylori).